Here is a 636-residue protein sequence, read N- to C-terminus: MAKQNLKSTDRAVQQMLDKAKREGIQTVWDRYEAMKPQCGFGETGLCCRHCLQGPCRINPFGDEPKVGICGATAEVIVARGLDRSIAAGAAGHSGHAKHLAHTLKKAVQGKAASYMIKDRTKLHSIAKRLGIPTEGQKDEDIALEVAKAALADFHEKDTPVLWVTTVLPPSRVKVLSAHGLIPAGIDHEIAEIMHRTSMGCDADAQNLLLGGLRCSLADLAGCYMGTDLADILFGTPAPVVTESNLGVLKADAVNVAVHGHNPVLSDIIVSVSKEMENEARAAGATGINVVGICCTGNEVLMRHGIPACTHSVSQEMAMITGALDAMILDYQCIQPSVATIAECTGTTVITTMEMSKITGATHVNFAEEAAVENAKQILRLAIDTFKRRKGKPVEIPNIKTKVVAGFSTEAIINALSKLNANDPLKPLIDNVVNGNIRGVCLFAGCNNVKVPQDQNFTTIARKLLKQNVLVVATGCGAGALMRHGFMDPANVDELCGDGLKAVLTAIGEANGLGGPLPPVLHMGSCVDNSRAVALVAALANRLGVDLDRLPVVASAAEAMHEKAVAIGTWAVTIGLPTHIGVLPPITGSLPVTQILTSSVKDITGGYFIVELDPETAADKLLAAINERRAGLGLPW.

Cys39, Cys47, Cys48, Cys51, Cys56, and Cys70 together coordinate [4Fe-4S] cluster. [Ni-4Fe-5S] cluster is bound by residues His261, Cys295, Cys333, Cys446, Cys476, and Cys526.

This sequence belongs to the Ni-containing carbon monoxide dehydrogenase family. As to quaternary structure, homodimer. The cofactor is [4Fe-4S] cluster. [Ni-4Fe-5S] cluster is required as a cofactor.

It is found in the cytoplasm. Its subcellular location is the cell membrane. The catalysed reaction is CO + 2 oxidized [2Fe-2S]-[ferredoxin] + H2O = 2 reduced [2Fe-2S]-[ferredoxin] + CO2 + 2 H(+). Inactivated by O(2). In terms of biological role, CODH oxidizes carbon monoxide coupled, via CooF, to the reduction of a hydrogen cation by a hydrogenase (possibly CooH). The chain is Carbon monoxide dehydrogenase 2 (cooS2) from Carboxydothermus hydrogenoformans (strain ATCC BAA-161 / DSM 6008 / Z-2901).